The primary structure comprises 580 residues: Protein O-linked-mannose beta-1,4-N-acetylglucosaminyltransferase 2 (580 aa).

Over Met1 to Ser4 the chain is Cytoplasmic. The chain crosses the membrane as a helical; Signal-anchor for type II membrane protein span at residues Ala5–Leu25. Residues Arg26–Thr580 are Lumenal-facing. N-linked (GlcNAc...) asparagine glycosylation is found at Asn99 and Asn276. The region spanning Ala488 to Thr580 is the Fibronectin type-III domain.

Belongs to the glycosyltransferase 61 family. In terms of tissue distribution, mainly expressed in the central nervous system.

It localises to the endoplasmic reticulum membrane. The catalysed reaction is 3-O-(alpha-D-mannosyl)-L-threonyl-[protein] + UDP-N-acetyl-alpha-D-glucosamine = 3-O-(N-acetyl-beta-D-glucosaminyl-(1-&gt;4)-alpha-D-mannosyl)-L-threonyl-[protein] + UDP + H(+). It functions in the pathway protein modification; protein glycosylation. O-linked mannose beta-1,4-N-acetylglucosaminyltransferase that transfers UDP-N-acetyl-D-glucosamine to the 4-position of the mannose to generate N-acetyl-D-glucosamine-beta-1,4-O-D-mannosylprotein. Involved in the biosynthesis of the phosphorylated O-mannosyl trisaccharide (N-acetylgalactosamine-beta-3-N-acetylglucosamine-beta-4-(phosphate-6-)mannose), a carbohydrate structure present in alpha-dystroglycan (DAG1), which is required for binding laminin G-like domain-containing extracellular proteins with high affinity. The polypeptide is Protein O-linked-mannose beta-1,4-N-acetylglucosaminyltransferase 2 (Pomgnt2) (Mus musculus (Mouse)).